Reading from the N-terminus, the 314-residue chain is Methenyltetrahydromethanopterin cyclohydrolase (314 aa).

This sequence belongs to the MCH family.

It is found in the cytoplasm. The enzyme catalyses 5,10-methenyl-5,6,7,8-tetrahydromethanopterin + H2O = N(5)-formyl-5,6,7,8-tetrahydromethanopterin + H(+). It functions in the pathway one-carbon metabolism; methanogenesis from CO(2); 5,10-methenyl-5,6,7,8-tetrahydromethanopterin from CO(2): step 3/3. Catalyzes the reversible interconversion of 5-formyl-H(4)MPT to methenyl-H(4)MPT(+). This Methanocorpusculum labreanum (strain ATCC 43576 / DSM 4855 / Z) protein is Methenyltetrahydromethanopterin cyclohydrolase.